Consider the following 278-residue polypeptide: Biotin synthase (278 aa).

A Radical SAM core domain is found at 1-227 (MQIMLCAISN…QSVVMVAGGR (227 aa)). Positions 16, 20, and 23 each coordinate [4Fe-4S] cluster. Residues C60, C95, and C153 each contribute to the [2Fe-2S] cluster site.

It belongs to the radical SAM superfamily. Biotin synthase family. In terms of assembly, homodimer. [4Fe-4S] cluster is required as a cofactor. It depends on [2Fe-2S] cluster as a cofactor.

It catalyses the reaction (4R,5S)-dethiobiotin + (sulfur carrier)-SH + 2 reduced [2Fe-2S]-[ferredoxin] + 2 S-adenosyl-L-methionine = (sulfur carrier)-H + biotin + 2 5'-deoxyadenosine + 2 L-methionine + 2 oxidized [2Fe-2S]-[ferredoxin]. It participates in cofactor biosynthesis; biotin biosynthesis; biotin from 7,8-diaminononanoate: step 2/2. Its function is as follows. Catalyzes the conversion of dethiobiotin (DTB) to biotin by the insertion of a sulfur atom into dethiobiotin via a radical-based mechanism. The chain is Biotin synthase from Campylobacter jejuni subsp. jejuni serotype O:6 (strain 81116 / NCTC 11828).